The following is a 614-amino-acid chain: Threonine--tRNA ligase (614 aa).

The editing domain stretch occupies residues 1 to 141 (MRLLLIHSDY…LSKTIVPGEE (141 aa)). The segment at 198–490 (AHVDLMRSKE…ISTQKVPALP (293 aa)) is catalytic. Cys290, His342, and His463 together coordinate Zn(2+).

It belongs to the class-II aminoacyl-tRNA synthetase family. Homodimer. Zn(2+) is required as a cofactor.

It localises to the cytoplasm. The enzyme catalyses tRNA(Thr) + L-threonine + ATP = L-threonyl-tRNA(Thr) + AMP + diphosphate + H(+). In terms of biological role, catalyzes the attachment of threonine to tRNA(Thr) in a two-step reaction: L-threonine is first activated by ATP to form Thr-AMP and then transferred to the acceptor end of tRNA(Thr). Also edits incorrectly charged L-seryl-tRNA(Thr). This is Threonine--tRNA ligase from Methanoregula boonei (strain DSM 21154 / JCM 14090 / 6A8).